Consider the following 297-residue polypeptide: D-aminoacyl-tRNA deacylase (297 aa).

Belongs to the DtdA deacylase family. In terms of assembly, monomer. Requires Zn(2+) as cofactor.

It carries out the reaction a D-aminoacyl-tRNA + H2O = a tRNA + a D-alpha-amino acid + H(+). It catalyses the reaction glycyl-tRNA(Ala) + H2O = tRNA(Ala) + glycine + H(+). Functionally, D-aminoacyl-tRNA deacylase with broad substrate specificity. By recycling D-aminoacyl-tRNA to D-amino acids and free tRNA molecules, this enzyme counteracts the toxicity associated with the formation of D-aminoacyl-tRNA entities in vivo. This Methanosarcina mazei (strain ATCC BAA-159 / DSM 3647 / Goe1 / Go1 / JCM 11833 / OCM 88) (Methanosarcina frisia) protein is D-aminoacyl-tRNA deacylase.